An 875-amino-acid chain; its full sequence is Protein translocase subunit SecA (875 aa).

ATP is bound by residues Gln87, Gly105–Thr109, and Asp512. Zn(2+)-binding residues include Cys860, Cys862, Cys871, and His872.

This sequence belongs to the SecA family. As to quaternary structure, monomer and homodimer. Part of the essential Sec protein translocation apparatus which comprises SecA, SecYEG and auxiliary proteins SecDF-YajC and YidC. Requires Zn(2+) as cofactor.

The protein resides in the cell inner membrane. The protein localises to the cytoplasm. The catalysed reaction is ATP + H2O + cellular proteinSide 1 = ADP + phosphate + cellular proteinSide 2.. In terms of biological role, part of the Sec protein translocase complex. Interacts with the SecYEG preprotein conducting channel. Has a central role in coupling the hydrolysis of ATP to the transfer of proteins into and across the cell membrane, serving both as a receptor for the preprotein-SecB complex and as an ATP-driven molecular motor driving the stepwise translocation of polypeptide chains across the membrane. The polypeptide is Protein translocase subunit SecA (Buchnera aphidicola subsp. Acyrthosiphon pisum (strain 5A)).